Consider the following 419-residue polypeptide: UDP-N-acetylglucosamine 1-carboxyvinyltransferase (419 aa).

Phosphoenolpyruvate is bound at residue 22 to 23; the sequence is KN. Residue arginine 93 participates in UDP-N-acetyl-alpha-D-glucosamine binding. Cysteine 117 (proton donor) is an active-site residue. Position 117 is a 2-(S-cysteinyl)pyruvic acid O-phosphothioketal (cysteine 117). 2 residues coordinate UDP-N-acetyl-alpha-D-glucosamine: aspartate 307 and isoleucine 329.

The protein belongs to the EPSP synthase family. MurA subfamily.

It is found in the cytoplasm. The catalysed reaction is phosphoenolpyruvate + UDP-N-acetyl-alpha-D-glucosamine = UDP-N-acetyl-3-O-(1-carboxyvinyl)-alpha-D-glucosamine + phosphate. The protein operates within cell wall biogenesis; peptidoglycan biosynthesis. Its function is as follows. Cell wall formation. Adds enolpyruvyl to UDP-N-acetylglucosamine. This chain is UDP-N-acetylglucosamine 1-carboxyvinyltransferase, found in Shewanella baltica (strain OS195).